A 339-amino-acid polypeptide reads, in one-letter code: D-erythrose-4-phosphate dehydrogenase (339 aa).

12-13 is a binding site for NAD(+); sequence RI. Residues 154-156, Arg200, 213-214, and Arg236 each bind substrate; these read SCT and TK. Cys155 functions as the Nucleophile in the catalytic mechanism. Position 318 (Asn318) interacts with NAD(+).

The protein belongs to the glyceraldehyde-3-phosphate dehydrogenase family. Epd subfamily. As to quaternary structure, homotetramer.

The protein localises to the cytoplasm. The enzyme catalyses D-erythrose 4-phosphate + NAD(+) + H2O = 4-phospho-D-erythronate + NADH + 2 H(+). It participates in cofactor biosynthesis; pyridoxine 5'-phosphate biosynthesis; pyridoxine 5'-phosphate from D-erythrose 4-phosphate: step 1/5. Its function is as follows. Catalyzes the NAD-dependent conversion of D-erythrose 4-phosphate to 4-phosphoerythronate. The polypeptide is D-erythrose-4-phosphate dehydrogenase (Proteus mirabilis (strain HI4320)).